A 122-amino-acid chain; its full sequence is ATP-dependent Clp protease adapter protein ClpS (122 aa).

The disordered stretch occupies residues 1-33 (MHAPSQIRLTFNQDHPEPHEHEDEGAGLAVQES). The segment covering 14–24 (DHPEPHEHEDE) has biased composition (basic and acidic residues).

The protein belongs to the ClpS family. Binds to the N-terminal domain of the chaperone ClpA.

In terms of biological role, involved in the modulation of the specificity of the ClpAP-mediated ATP-dependent protein degradation. The polypeptide is ATP-dependent Clp protease adapter protein ClpS (Pseudomonas aeruginosa (strain ATCC 15692 / DSM 22644 / CIP 104116 / JCM 14847 / LMG 12228 / 1C / PRS 101 / PAO1)).